A 287-amino-acid polypeptide reads, in one-letter code: Pantothenate synthetase (287 aa).

Position 30 to 37 (30 to 37 (MGNLHSGH)) interacts with ATP. Residue H37 is the Proton donor of the active site. Residue Q61 participates in (R)-pantoate binding. Q61 lines the beta-alanine pocket. 149–152 (GEKD) serves as a coordination point for ATP. Residue Q155 participates in (R)-pantoate binding. ATP is bound by residues V178 and 186–189 (LSSR).

Belongs to the pantothenate synthetase family. As to quaternary structure, homodimer.

It localises to the cytoplasm. It catalyses the reaction (R)-pantoate + beta-alanine + ATP = (R)-pantothenate + AMP + diphosphate + H(+). It participates in cofactor biosynthesis; (R)-pantothenate biosynthesis; (R)-pantothenate from (R)-pantoate and beta-alanine: step 1/1. Its function is as follows. Catalyzes the condensation of pantoate with beta-alanine in an ATP-dependent reaction via a pantoyl-adenylate intermediate. The sequence is that of Pantothenate synthetase from Pseudomonas entomophila (strain L48).